Here is a 255-residue protein sequence, read N- to C-terminus: uncharacterized protein (255 aa).

Residues 1 to 23 form the signal peptide; the sequence is MKRLNTLVLYISFLILIISIVAG. Cys24 carries the N-palmitoyl cysteine lipid modification. Cys24 carries S-diacylglycerol cysteine lipidation.

Belongs to the staphylococcal tandem lipoprotein family.

The protein resides in the cell membrane. This is an uncharacterized protein from Staphylococcus aureus (strain N315).